The chain runs to 1148 residues: Protocadherin-19 (1148 aa).

The first 21 residues, 1–21 (MESLLLPVLLLLAILWTQAAA), serve as a signal peptide directing secretion. 6 consecutive Cadherin domains span residues 22–129 (LINL…APSF), 130–238 (PAAQ…NPVF), 239–346 (SEST…PPVI), 350–453 (SVNS…HPHF), 454–563 (SKPY…TPVI), and 569–672 (INGT…QESM). Residues 22–678 (LINLKYSVEE…QESMGSVNLS (657 aa)) are Extracellular-facing. Positions 31, 32, 88, and 90 each coordinate Ca(2+). Cysteines 93 and 99 form a disulfide. Ca(2+)-binding residues include aspartate 121, asparagine 123, aspartate 124, asparagine 125, glutamate 140, aspartate 155, aspartate 157, glutamate 199, aspartate 212, aspartate 230, serine 231, asparagine 232, aspartate 233, asparagine 234, and glutamate 249. An N-linked (GlcNAc...) asparagine glycan is attached at asparagine 261. Residues aspartate 264, aspartate 266, asparagine 270, aspartate 305, glutamate 307, aspartate 338, asparagine 340, aspartate 341, asparagine 342, glutamate 360, aspartate 375, aspartate 377, asparagine 381, aspartate 412, and glutamate 414 each coordinate Ca(2+). A glycan (N-linked (GlcNAc...) asparagine) is linked at asparagine 420. The Ca(2+) site is built by aspartate 427, aspartate 445, glutamate 446, asparagine 447, aspartate 448, asparagine 449, glutamate 464, aspartate 479, aspartate 481, asparagine 485, asparagine 522, glutamate 524, and aspartate 537. N-linked (GlcNAc...) asparagine glycosylation occurs at asparagine 485. The N-linked (GlcNAc...) asparagine glycan is linked to asparagine 546. Residues aspartate 555, valine 556, asparagine 557, aspartate 558, and asparagine 559 each contribute to the Ca(2+) site. Asparagine 570 carries N-linked (GlcNAc...) asparagine glycosylation. 4 residues coordinate Ca(2+): aspartate 594, aspartate 596, asparagine 600, and aspartate 646. N-linked (GlcNAc...) asparagine glycosylation occurs at asparagine 676. A helical transmembrane segment spans residues 679-699 (LIFIIALGSIAGILFVTMIFV). Over 700–1148 (AIKCKRDNKE…GVKRLKDIVL (449 aa)) the chain is Cytoplasmic. Disordered stretches follow at residues 901–921 (GNSLKDSGHEESDQTDSEHDV) and 1100–1148 (NVNN…DIVL). Basic and acidic residues-rich tracts occupy residues 906–921 (DSGHEESDQTDSEHDV), 1109–1123 (SEAEPRGADSEKVMH), and 1130–1148 (KEGRNKESPGVKRLKDIVL).

Homodimer; antiparallel. As to expression, moderately expressed in all regions of the brain examined, with lowest levels found in the cerebellum. Moderate expression is also found in ovary, and low expression in all other tissues tested. Also detected in primary skin fibroblast.

It is found in the cell membrane. Its function is as follows. Calcium-dependent cell-adhesion protein. This is Protocadherin-19 (PCDH19) from Homo sapiens (Human).